The primary structure comprises 489 residues: Lysine-specific permease LysP (489 aa).

Residues 2-22 (VSETKTTEAPGLRRELKARHL) lie on the Cytoplasmic side of the membrane. A helical transmembrane segment spans residues 23-43 (TMIAIGGSIGTGLFVASGATI). The Periplasmic portion of the chain corresponds to 44-45 (SQ). The chain crosses the membrane as a helical span at residues 46–66 (AGPGGALLSYMLIGLMVYFLM). Over 67-105 (TSLGELAAYMPVSGSFATYGQNYVEEGFGFALGWNYWYN) the chain is Cytoplasmic. Residues 106 to 126 (WAVTIAVDLVAAQLVMSWWFP) traverse the membrane as a helical segment. The Periplasmic portion of the chain corresponds to 127-128 (DT). A helical membrane pass occupies residues 129–149 (PGWIWSALFLGVIFLLNYISV). At 150 to 161 (RGFGEAEYWFSL) the chain is on the cytoplasmic side. A helical membrane pass occupies residues 162 to 182 (IKVTTVIVFIIVGVLMIIGIF). Residues 183–197 (KGAQPAGWSNWTIGE) are Periplasmic-facing. A helical transmembrane segment spans residues 198–218 (APFAGGFAAMIGVAMIVGFSF). Residues 219-244 (QGTELIGIAAGESEDPAKNIPRAVRQ) are Cytoplasmic-facing. A helical transmembrane segment spans residues 245–265 (VFWRILLFYVFAILIISLIIP). Residues 266-290 (YTDPSLLRNDVKDISVSPFTLVFQH) are Periplasmic-facing. Residues 291 to 311 (AGLLSAAAVMNAVILTAVLSA) traverse the membrane as a helical segment. The Cytoplasmic portion of the chain corresponds to 312–346 (GNSGMYASTRMLYTLACDGKAPRIFAKLSRGGVPR). A helical transmembrane segment spans residues 347–367 (NALYATTVIAGLCFLTSMFGN). The Periplasmic portion of the chain corresponds to 368–370 (QTV). A helical membrane pass occupies residues 371 to 391 (YLWLLNTSGMTGFIAWLGIAI). Residues 392–413 (SHYRFRRGYVLQGHDINDLPYR) lie on the Cytoplasmic side of the membrane. The chain crosses the membrane as a helical span at residues 414–434 (SGFFPLGPIFAFILCLIITLG). Residues 435–446 (QNYEAFLKDTID) lie on the Periplasmic side of the membrane. The helical transmembrane segment at 447–467 (WGGVAATYIGIPLFLIIWFGY) threads the bilayer. The Cytoplasmic portion of the chain corresponds to 468–489 (KLIKGTHFVRYSEMKFPQNDKK).

Belongs to the amino acid-polyamine-organocation (APC) superfamily. Amino acid transporter (AAT) (TC 2.A.3.1) family. Interacts strongly with the transcriptional activator CadC in the absence of lysine or at low lysine concentrations. Interaction is markedly attenuated under increasing lysine levels. Concomitant pH-dependent protonation of periplasmic amino acids in both proteins dissolves their electrostatic connections resulting in further destabilization of the CadC/LysP interaction. Low pH promotes oligomerization of LysP.

The protein resides in the cell inner membrane. The enzyme catalyses L-lysine(out) + H(+)(out) = L-lysine(in) + H(+)(in). Its function is as follows. Permease involved in lysine uptake. In addition, functions as a lysine sensor that mediates the lysine-dependent regulation of the transcriptional activator CadC. In the absence of lysine, or at low lysine concentrations, LysP inhibits CadC by an interaction with the transmembrane domain of CadC. In the presence of lysine, LysP loses its ability to interact with and inhibit CadC, and acts as a lysine permease. The chain is Lysine-specific permease LysP from Escherichia coli (strain K12).